Here is a 943-residue protein sequence, read N- to C-terminus: UvrABC system protein A (943 aa).

Residue 31–38 participates in ATP binding; it reads GLSGSGKS. The C4-type zinc finger occupies 253–280; it reads CPHCGYSVPELEPRLFSFNNPAGACPTC. 2 ABC transporter domains span residues 310 to 587 and 607 to 937; these read WDRR…PHSI and LDKK…RFLK. Residue 640–647 coordinates ATP; that stretch reads GVSGSGKS. A C4-type zinc finger spans residues 740–766; that stretch reads CEACQGDGVIKVEMHFLPDVYVPCEQC.

It belongs to the ABC transporter superfamily. UvrA family. Forms a heterotetramer with UvrB during the search for lesions.

It is found in the cytoplasm. In terms of biological role, the UvrABC repair system catalyzes the recognition and processing of DNA lesions. UvrA is an ATPase and a DNA-binding protein. A damage recognition complex composed of 2 UvrA and 2 UvrB subunits scans DNA for abnormalities. When the presence of a lesion has been verified by UvrB, the UvrA molecules dissociate. This is UvrABC system protein A from Pasteurella multocida (strain Pm70).